We begin with the raw amino-acid sequence, 322 residues long: GDSL esterase/lipase At2g04020 (322 aa).

The first 26 residues, 1–26, serve as a signal peptide directing secretion; sequence MGLPSSLESYLLLILLSFLNVSTIYS. S50 functions as the Nucleophile in the catalytic mechanism. Residue N260 is glycosylated (N-linked (GlcNAc...) asparagine). Active-site residues include D296 and H299.

It belongs to the 'GDSL' lipolytic enzyme family.

Its subcellular location is the secreted. In Arabidopsis thaliana (Mouse-ear cress), this protein is GDSL esterase/lipase At2g04020.